The chain runs to 622 residues: Elongation factor 4 (622 aa).

The region spanning 17–201 (ALIRNFCIIA…KVVAEVPAPV (185 aa)) is the tr-type G domain. GTP contacts are provided by residues 29-34 (DHGKST) and 148-151 (NKID).

The protein belongs to the TRAFAC class translation factor GTPase superfamily. Classic translation factor GTPase family. LepA subfamily.

The protein resides in the cell membrane. It catalyses the reaction GTP + H2O = GDP + phosphate + H(+). In terms of biological role, required for accurate and efficient protein synthesis under certain stress conditions. May act as a fidelity factor of the translation reaction, by catalyzing a one-codon backward translocation of tRNAs on improperly translocated ribosomes. Back-translocation proceeds from a post-translocation (POST) complex to a pre-translocation (PRE) complex, thus giving elongation factor G a second chance to translocate the tRNAs correctly. Binds to ribosomes in a GTP-dependent manner. The polypeptide is Elongation factor 4 (Streptomyces coelicolor (strain ATCC BAA-471 / A3(2) / M145)).